We begin with the raw amino-acid sequence, 465 residues long: MTSMASLFSFTSPAVKRLLGWKQGDEEEKWAEKAVDALVKKLKKKKGAMEELEKALSSPGQPSKCVTIPRSLDGRLQVSHRKGLPHVIYCRVWRWPDLQSHHELKPLDICEFPFGSKQKEVCINPYHYKRVESPVLPPVLVPRHNEFNPQHSLLVQFRNLSHNEPHMPQNATFPDSFHQPNNAPFPLSPNSPYPPSPASSTYPNSPASSGPGSPFQLPADTPPPAYMPPDDQMAPDNSQPMDTSSNMIPQTMPSISSRDVQPVAYEEPKHWCSIVYYELNNRVGEAFHASSTSVLVDGFTDPSNNKSRFCLGLLSNVNRNSTIENTRRHIGKGVHLYYVGGEVYAECLSDSSIFVQSRNCNFHHGFHPTTVCKIPSSCSLKIFNNQEFAQLLAQSVNHGFEAVYELTKMCTIRMSFVKGWGAEYHRQDVTSTPCWIEIHLHGPLQWLDKVLTQMGSPLNPISSVS.

Thr2 carries the post-translational modification N-acetylthreonine. Residues 13–137 form the MH1 domain; sequence PAVKRLLGWK…YKRVESPVLP (125 aa). 4 residues coordinate Zn(2+): Cys65, Cys110, Cys122, and His127. Residues 163 to 251 are disordered; the sequence is NEPHMPQNAT…DTSSNMIPQT (89 aa). A compositionally biased stretch (polar residues) spans 169–182; that stretch reads QNATFPDSFHQPNN. Residues 186-197 show a composition bias toward pro residues; sequence PLSPNSPYPPSP. Low complexity predominate over residues 198-214; the sequence is ASSTYPNSPASSGPGSP. Residues 237–251 are compositionally biased toward polar residues; it reads NSQPMDTSSNMIPQT. Positions 271-465 constitute an MH2 domain; that stretch reads WCSIVYYELN…SPLNPISSVS (195 aa). A phosphoserine mark is found at Ser463 and Ser465.

Belongs to the dwarfin/SMAD family. In terms of assembly, homodimer. Forms trimers with the co-SMAD SMAD4. Interacts with PEBP2-alpha subunit and SMURF1. Interacts with SUV39H1 and SUV39H2. Interacts (via MH2 domain) with LEMD3. Interacts with WWP1. Interacts with TMEM119. Interacts with ZNF8. Interacts with RANBP3L. Interacts with HK1. Interacts with HGS; this interaction attenuates BMP signaling. In terms of processing, phosphorylated on serine by BMP (bone morphogenetic proteins) type 1 receptor kinase. Post-translationally, ubiquitin-mediated proteolysis by SMAD-specific E3 ubiquitin ligase SMURF1. As to expression, predominantly expressed in mesenchyme and somites during embryogenesis, and present in many tissues of the adult.

The protein resides in the cytoplasm. The protein localises to the nucleus. It is found in the mitochondrion. Its function is as follows. Transcriptional regulator that plays a role in various cellular processes including embryonic development, cell differentiation, angiogenesis and tissue homeostasis. Upon BMP ligand binding to their receptors at the cell surface, is phosphorylated by activated type I BMP receptors (BMPRIs) and associates with SMAD4 to form a heteromeric complex which translocates into the nucleus acting as transcription factor. In turn, the hetero-trimeric complex recognizes cis-regulatory elements containing Smad Binding Elements (SBEs) to modulate the outcome of the signaling network. Non-phosphorylated SMAD5 has a cytoplasmic role in energy metabolism regulation by promoting mitochondrial respiration and glycolysis in response to cytoplasmic pH changes. Mechanistically, interacts with hexokinase 1/HK1 and thereby accelerates glycolysis. This is Mothers against decapentaplegic homolog 5 (Smad5) from Mus musculus (Mouse).